The sequence spans 78 residues: UPF0291 protein SE_1024 (78 aa).

The segment at 53-78 (TKVIDPEGNDVTPEKLKKIQEEKHNK) is disordered. The segment covering 64–78 (TPEKLKKIQEEKHNK) has biased composition (basic and acidic residues).

The protein belongs to the UPF0291 family.

The protein resides in the cytoplasm. This is UPF0291 protein SE_1024 from Staphylococcus epidermidis (strain ATCC 12228 / FDA PCI 1200).